A 257-amino-acid chain; its full sequence is Diphthine synthase (257 aa).

Residues isoleucine 11, aspartate 89, isoleucine 92, serine 117 to valine 118, leucine 169, leucine 210, and histidine 235 contribute to the S-adenosyl-L-methionine site.

This sequence belongs to the diphthine synthase family. Homodimer.

It catalyses the reaction 2-[(3S)-amino-3-carboxypropyl]-L-histidyl-[translation elongation factor 2] + 3 S-adenosyl-L-methionine = diphthine-[translation elongation factor 2] + 3 S-adenosyl-L-homocysteine + 3 H(+). Its pathway is protein modification; peptidyl-diphthamide biosynthesis. Its function is as follows. S-adenosyl-L-methionine-dependent methyltransferase that catalyzes the trimethylation of the amino group of the modified target histidine residue in translation elongation factor 2 (EF-2), to form an intermediate called diphthine. The three successive methylation reactions represent the second step of diphthamide biosynthesis. This is Diphthine synthase from Saccharolobus solfataricus (strain ATCC 35092 / DSM 1617 / JCM 11322 / P2) (Sulfolobus solfataricus).